The chain runs to 451 residues: uncharacterized protein (451 aa).

The N-terminal stretch at 1-22 (MKLKLIFSLFLVLVFCSLFVFG) is a signal peptide. N-linked (GlcNAc...) asparagine glycans are attached at residues Asn-25, Asn-45, Asn-209, Asn-326, and Asn-402.

Its subcellular location is the secreted. This is an uncharacterized protein from Dictyostelium discoideum (Social amoeba).